The chain runs to 4083 residues: Dynein axonemal heavy chain 3 (4083 aa).

Disordered stretches follow at residues 1–37 (MSDT…VSAN) and 111–132 (DKTS…PSKK). The stem stretch occupies residues 1 to 1357 (MSDTNCSAQK…HVQMITTEAL (1357 aa)). 2 coiled-coil regions span residues 1026 to 1052 (IKPI…AWLK) and 1108 to 1133 (RMTE…YLEK). 4 AAA regions span residues 1358-1579 (YGYE…VLTA), 1639-1870 (EALN…LHCK), 2003-2251 (TIPA…VIQG), and 2362-2613 (EFNS…LLRH). ATP is bound by residues 1396-1403 (GPAGTGKT), 1677-1684 (GDPMGGKT), 2041-2048 (GPTGTGKS), and 2401-2408 (GIGGSGRQ). The tract at residues 2628–2927 (FKTLLNSKRQ…NSLEKNIEIC (300 aa)) is stalk. Residues 2651–2714 (QKLEFASSQV…DEKEANAAAA (64 aa)) adopt a coiled-coil conformation. AAA regions lie at residues 3012–3242 (LGDP…EISE) and 3455–3679 (IQNF…QIQM).

This sequence belongs to the dynein heavy chain family. Consists of at least two heavy chains and a number of intermediate and light chains.

The protein resides in the cytoplasm. The protein localises to the cytoskeleton. It localises to the cilium axoneme. In terms of biological role, force generating protein of respiratory cilia. Produces force towards the minus ends of microtubules. Dynein has ATPase activity; the force-producing power stroke is thought to occur on release of ADP. Involved in sperm motility; implicated in sperm flagellar assembly. The polypeptide is Dynein axonemal heavy chain 3 (Dnah3) (Mus musculus (Mouse)).